A 28-amino-acid polypeptide reads, in one-letter code: Cyclotide vodo I1 (28 aa).

Intrachain disulfides connect cysteine 4–cysteine 18, cysteine 8–cysteine 20, and cysteine 13–cysteine 25.

Post-translationally, this is a cyclic peptide. In terms of processing, contains 3 disulfide bonds.

Probably participates in a plant defense mechanism. The sequence is that of Cyclotide vodo I1 from Viola odorata (Sweet violet).